The following is a 239-amino-acid chain: Fatty acid metabolism regulator protein (239 aa).

In terms of domain architecture, HTH gntR-type spans 6–74; the sequence is QSPAGFAEEY…HGKPTKVNNF (69 aa). A DNA-binding region (H-T-H motif) is located at residues 34–53; it reads ERELSELIGVTRTTLREVLQ.

Homodimer.

The protein localises to the cytoplasm. Functionally, multifunctional regulator of fatty acid metabolism. This Proteus mirabilis (strain HI4320) protein is Fatty acid metabolism regulator protein.